A 266-amino-acid chain; its full sequence is Ribosomal RNA small subunit methyltransferase A (266 aa).

The S-adenosyl-L-methionine site is built by N12, L14, G39, E61, D87, and N107.

Belongs to the class I-like SAM-binding methyltransferase superfamily. rRNA adenine N(6)-methyltransferase family. RsmA subfamily.

The protein localises to the cytoplasm. It carries out the reaction adenosine(1518)/adenosine(1519) in 16S rRNA + 4 S-adenosyl-L-methionine = N(6)-dimethyladenosine(1518)/N(6)-dimethyladenosine(1519) in 16S rRNA + 4 S-adenosyl-L-homocysteine + 4 H(+). Functionally, specifically dimethylates two adjacent adenosines (A1518 and A1519) in the loop of a conserved hairpin near the 3'-end of 16S rRNA in the 30S particle. May play a critical role in biogenesis of 30S subunits. The sequence is that of Ribosomal RNA small subunit methyltransferase A from Nitratidesulfovibrio vulgaris (strain ATCC 29579 / DSM 644 / CCUG 34227 / NCIMB 8303 / VKM B-1760 / Hildenborough) (Desulfovibrio vulgaris).